A 488-amino-acid chain; its full sequence is Glutamyl-tRNA(Gln) amidotransferase subunit A (488 aa).

Residues K77 and S152 each act as charge relay system in the active site. S176 (acyl-ester intermediate) is an active-site residue.

Belongs to the amidase family. GatA subfamily. As to quaternary structure, heterotrimer of A, B and C subunits.

It catalyses the reaction L-glutamyl-tRNA(Gln) + L-glutamine + ATP + H2O = L-glutaminyl-tRNA(Gln) + L-glutamate + ADP + phosphate + H(+). Its function is as follows. Allows the formation of correctly charged Gln-tRNA(Gln) through the transamidation of misacylated Glu-tRNA(Gln) in organisms which lack glutaminyl-tRNA synthetase. The reaction takes place in the presence of glutamine and ATP through an activated gamma-phospho-Glu-tRNA(Gln). The protein is Glutamyl-tRNA(Gln) amidotransferase subunit A of Streptococcus equi subsp. zooepidemicus (strain MGCS10565).